The sequence spans 160 residues: ATP synthase subunit b (160 aa).

The chain crosses the membrane as a helical span at residues 13–33 (VNLAIVIGVLVWFLRGFLGGI).

This sequence belongs to the ATPase B chain family. In terms of assembly, F-type ATPases have 2 components, F(1) - the catalytic core - and F(0) - the membrane proton channel. F(1) has five subunits: alpha(3), beta(3), gamma(1), delta(1), epsilon(1). F(0) has four main subunits: a(1), b(1), b'(1) and c(10-14). The alpha and beta chains form an alternating ring which encloses part of the gamma chain. F(1) is attached to F(0) by a central stalk formed by the gamma and epsilon chains, while a peripheral stalk is formed by the delta, b and b' chains.

Its subcellular location is the cellular thylakoid membrane. F(1)F(0) ATP synthase produces ATP from ADP in the presence of a proton or sodium gradient. F-type ATPases consist of two structural domains, F(1) containing the extramembraneous catalytic core and F(0) containing the membrane proton channel, linked together by a central stalk and a peripheral stalk. During catalysis, ATP synthesis in the catalytic domain of F(1) is coupled via a rotary mechanism of the central stalk subunits to proton translocation. Functionally, component of the F(0) channel, it forms part of the peripheral stalk, linking F(1) to F(0). The polypeptide is ATP synthase subunit b (Parasynechococcus marenigrum (strain WH8102)).